The following is a 481-amino-acid chain: FBD-associated F-box protein At5g44490 (481 aa).

The 48-residue stretch at 17 to 64 (DLMSKLTDALISQVLFYLPTKEAVSTSVLSSRWKSVWLLIPDLDLNSS) folds into the F-box domain. In terms of domain architecture, FBD spans 370–423 (EKSVSFSSVPQCLLSSLEFVEIKISRFGIISLGIGIARFFVENSVVLKKLVVHS).

This is FBD-associated F-box protein At5g44490 from Arabidopsis thaliana (Mouse-ear cress).